Consider the following 125-residue polypeptide: Cytochrome c2 (125 aa).

Positions 1–21 (MKAIKIAMVGAALVWSASAYA) are cleaved as a signal peptide. The region spanning 23–123 (GDPVKGEQVF…DVIAFLATQH (101 aa)) is the Cytochrome c domain. Positions 35, 38, 39, and 101 each coordinate heme c.

This sequence belongs to the cytochrome c family. In terms of processing, binds 1 heme c group covalently per subunit.

In terms of biological role, cytochrome c2 is found mainly in purple, non-sulfur, photosynthetic bacteria where it functions as the electron donor to the oxidized bacteriochlorophyll in the photophosphorylation pathway. However, it may also have a role in the respiratory chain and is found in some non-photosynthetic bacteria. The polypeptide is Cytochrome c2 (Rhodomicrobium vannielii (strain ATCC 17100 / DSM 162 / LMG 4299 / NCIMB 10020 / ATH 3.1.1)).